A 701-amino-acid polypeptide reads, in one-letter code: Elongation factor G (701 aa).

Residues 8-286 (ERIRNIGIIA…AVVYYLPSPV (279 aa)) form the tr-type G domain. GTP is bound by residues 17 to 24 (AHIDAGKT), 85 to 89 (DTPGH), and 139 to 142 (NKMD).

This sequence belongs to the TRAFAC class translation factor GTPase superfamily. Classic translation factor GTPase family. EF-G/EF-2 subfamily.

It is found in the cytoplasm. In terms of biological role, catalyzes the GTP-dependent ribosomal translocation step during translation elongation. During this step, the ribosome changes from the pre-translocational (PRE) to the post-translocational (POST) state as the newly formed A-site-bound peptidyl-tRNA and P-site-bound deacylated tRNA move to the P and E sites, respectively. Catalyzes the coordinated movement of the two tRNA molecules, the mRNA and conformational changes in the ribosome. This chain is Elongation factor G, found in Roseiflexus castenholzii (strain DSM 13941 / HLO8).